A 173-amino-acid polypeptide reads, in one-letter code: UPF0598 protein F59C6.12 (173 aa).

This sequence belongs to the UPF0598 family.

The chain is UPF0598 protein F59C6.12 from Caenorhabditis elegans.